Reading from the N-terminus, the 319-residue chain is D-alanine--D-alanine ligase B (319 aa).

Residues 117-312 (KRVWLSLGLP…FQQLVLAILA (196 aa)) enclose the ATP-grasp domain. 143-198 (AQRLGFPLIVKPAHEGSSIGMAKVGGLDELIAAWREAARYDSQVLVEQWISGPEFT) is a binding site for ATP. Mg(2+) is bound by residues Asp-266, Glu-279, and Asn-281.

The protein belongs to the D-alanine--D-alanine ligase family. Requires Mg(2+) as cofactor. It depends on Mn(2+) as a cofactor.

The protein localises to the cytoplasm. It catalyses the reaction 2 D-alanine + ATP = D-alanyl-D-alanine + ADP + phosphate + H(+). It participates in cell wall biogenesis; peptidoglycan biosynthesis. In terms of biological role, cell wall formation. In Pseudomonas aeruginosa (strain ATCC 15692 / DSM 22644 / CIP 104116 / JCM 14847 / LMG 12228 / 1C / PRS 101 / PAO1), this protein is D-alanine--D-alanine ligase B.